The following is a 342-amino-acid chain: Large ribosomal subunit protein uL3 (342 aa).

This sequence belongs to the universal ribosomal protein uL3 family. As to quaternary structure, part of the 50S ribosomal subunit. Forms a cluster with proteins L14 and L24e.

One of the primary rRNA binding proteins, it binds directly near the 3'-end of the 23S rRNA, where it nucleates assembly of the 50S subunit. In Pyrobaculum islandicum (strain DSM 4184 / JCM 9189 / GEO3), this protein is Large ribosomal subunit protein uL3.